We begin with the raw amino-acid sequence, 295 residues long: Bifunctional protein FolD (295 aa).

Residues 164-166 (GRS), Ser-193, and Ile-234 each bind NADP(+).

Belongs to the tetrahydrofolate dehydrogenase/cyclohydrolase family. Homodimer.

It catalyses the reaction (6R)-5,10-methylene-5,6,7,8-tetrahydrofolate + NADP(+) = (6R)-5,10-methenyltetrahydrofolate + NADPH. The catalysed reaction is (6R)-5,10-methenyltetrahydrofolate + H2O = (6R)-10-formyltetrahydrofolate + H(+). The protein operates within one-carbon metabolism; tetrahydrofolate interconversion. Its function is as follows. Catalyzes the oxidation of 5,10-methylenetetrahydrofolate to 5,10-methenyltetrahydrofolate and then the hydrolysis of 5,10-methenyltetrahydrofolate to 10-formyltetrahydrofolate. This Flavobacterium johnsoniae (strain ATCC 17061 / DSM 2064 / JCM 8514 / BCRC 14874 / CCUG 350202 / NBRC 14942 / NCIMB 11054 / UW101) (Cytophaga johnsonae) protein is Bifunctional protein FolD.